The primary structure comprises 272 residues: Shikimate dehydrogenase (NADP(+)) (272 aa).

Shikimate-binding positions include Ser14–Ser16 and Thr61. Catalysis depends on Lys65, which acts as the Proton acceptor. Residue Glu77 coordinates NADP(+). 2 residues coordinate shikimate: Asn86 and Asp102. Residues Gly126 to Ala130, Asn149 to Arg154, and Met213 each bind NADP(+). Tyr215 provides a ligand contact to shikimate. Gly237 contributes to the NADP(+) binding site.

Belongs to the shikimate dehydrogenase family. Homodimer.

It catalyses the reaction shikimate + NADP(+) = 3-dehydroshikimate + NADPH + H(+). The protein operates within metabolic intermediate biosynthesis; chorismate biosynthesis; chorismate from D-erythrose 4-phosphate and phosphoenolpyruvate: step 4/7. Its function is as follows. Involved in the biosynthesis of the chorismate, which leads to the biosynthesis of aromatic amino acids. Catalyzes the reversible NADPH linked reduction of 3-dehydroshikimate (DHSA) to yield shikimate (SA). This is Shikimate dehydrogenase (NADP(+)) from Escherichia coli O139:H28 (strain E24377A / ETEC).